A 320-amino-acid polypeptide reads, in one-letter code: ATP-dependent 6-phosphofructokinase (320 aa).

Residue Gly12 participates in ATP binding. ADP-binding positions include Arg22–Arg26 and Arg55–Asp60. Residues Arg73–Phe74 and Gly103–Ser106 contribute to the ATP site. Asp104 lines the Mg(2+) pocket. Thr126–Asp128 serves as a coordination point for substrate. Asp128 functions as the Proton acceptor in the catalytic mechanism. Arg155 lines the ADP pocket. Substrate contacts are provided by residues Arg163 and Met170–Arg172. ADP is bound by residues Gly186 to Glu188, Lys212, and Lys214 to His216. Residues Glu223, Arg244, and His250 to Arg253 contribute to the substrate site.

Belongs to the phosphofructokinase type A (PFKA) family. ATP-dependent PFK group I subfamily. Prokaryotic clade 'B1' sub-subfamily. Homotetramer. The cofactor is Mg(2+).

It is found in the cytoplasm. The catalysed reaction is beta-D-fructose 6-phosphate + ATP = beta-D-fructose 1,6-bisphosphate + ADP + H(+). The protein operates within carbohydrate degradation; glycolysis; D-glyceraldehyde 3-phosphate and glycerone phosphate from D-glucose: step 3/4. With respect to regulation, allosterically activated by ADP and other diphosphonucleosides, and allosterically inhibited by phosphoenolpyruvate. In terms of biological role, catalyzes the phosphorylation of D-fructose 6-phosphate to fructose 1,6-bisphosphate by ATP, the first committing step of glycolysis. This chain is ATP-dependent 6-phosphofructokinase, found in Buchnera aphidicola subsp. Schizaphis graminum (strain Sg).